Reading from the N-terminus, the 105-residue chain is Urease subunit beta (105 aa).

It belongs to the urease beta subunit family. In terms of assembly, heterotrimer of UreA (gamma), UreB (beta) and UreC (alpha) subunits. Three heterotrimers associate to form the active enzyme.

The protein resides in the cytoplasm. The enzyme catalyses urea + 2 H2O + H(+) = hydrogencarbonate + 2 NH4(+). It functions in the pathway nitrogen metabolism; urea degradation; CO(2) and NH(3) from urea (urease route): step 1/1. This Marinomonas sp. (strain MWYL1) protein is Urease subunit beta.